The following is a 286-amino-acid chain: Bifunctional protein FolD (286 aa).

NADP(+) is bound by residues 168-170 (GRG), threonine 195, and valine 236.

This sequence belongs to the tetrahydrofolate dehydrogenase/cyclohydrolase family. Homodimer.

The enzyme catalyses (6R)-5,10-methylene-5,6,7,8-tetrahydrofolate + NADP(+) = (6R)-5,10-methenyltetrahydrofolate + NADPH. The catalysed reaction is (6R)-5,10-methenyltetrahydrofolate + H2O = (6R)-10-formyltetrahydrofolate + H(+). It functions in the pathway one-carbon metabolism; tetrahydrofolate interconversion. In terms of biological role, catalyzes the oxidation of 5,10-methylenetetrahydrofolate to 5,10-methenyltetrahydrofolate and then the hydrolysis of 5,10-methenyltetrahydrofolate to 10-formyltetrahydrofolate. The polypeptide is Bifunctional protein FolD (Mycolicibacterium fortuitum (Mycobacterium fortuitum)).